The chain runs to 946 residues: Inhibin beta chain (946 aa).

2 disordered regions span residues 115–142 (VADR…SSTS) and 174–194 (KSRN…RRRR). A compositionally biased stretch (low complexity) spans 128–142 (VSVPTTPNETPSSTS). 4 N-linked (GlcNAc...) asparagine glycosylation sites follow: Asn-208, Asn-217, Asn-271, and Asn-389. The tract at residues 436 to 462 (SPGSHLFNGRGGRTDQRSERDPSHHKY) is disordered. Positions 447–459 (GRTDQRSERDPSH) are enriched in basic and acidic residues. Asn-471, Asn-484, Asn-542, Asn-561, Asn-566, Asn-732, and Asn-804 each carry an N-linked (GlcNAc...) asparagine glycan. 4 disulfide bridges follow: Cys-837–Cys-846, Cys-845–Cys-912, Cys-874–Cys-943, and Cys-878–Cys-945.

It belongs to the TGF-beta family. Homodimer or heterodimer; disulfide-linked. In terms of processing, cleaved in vitro by metalloproteases tok and tld to produce a 30 kDa product. As to expression, widely expressed in larval brains.

The protein localises to the secreted. In terms of biological role, controls several aspects of neuronal morphogenesis; essential for optic lobe development, EcR-B1 expression in larval brains, mushroom body remodeling, dorsal neuron morphogenesis and motoneuron axon guidance. Ligands Actbeta and daw act redundantly through the Activin receptor Babo and its transcriptional mediator Smad2 (Smox), to regulate neuroblast numbers and proliferation rates in the developing larval brain. The chain is Inhibin beta chain (Actbeta) from Drosophila melanogaster (Fruit fly).